Here is a 317-residue protein sequence, read N- to C-terminus: Glucokinase (317 aa).

This sequence belongs to the ROK (NagC/XylR) family. In terms of assembly, homodimer. The cofactor is a divalent metal cation.

It carries out the reaction D-glucose + ATP = D-glucose 6-phosphate + ADP + H(+). In terms of biological role, catalyzes the phosphorylation of D-glucose to D-glucose 6-phosphate using ATP as the phosphate donor. Can also phosphorylate 2-deoxyglucose, with lower efficiency. ITP can also serve as a phosphoryl donor. The polypeptide is Glucokinase (Thermotoga maritima (strain ATCC 43589 / DSM 3109 / JCM 10099 / NBRC 100826 / MSB8)).